The primary structure comprises 283 residues: Cyclin-C (283 aa).

Residues 46 to 144 (NVIQALGEHL…ILECEFYLLE (99 aa)) form the Cyclin N-terminal domain. The segment at 252 to 283 (TILSKMPKPKPPPNSEGEQGPNGSQNSSYSQS) is disordered. A compositionally biased stretch (polar residues) spans 272–283 (PNGSQNSSYSQS). The residue at position 275 (S275) is a Phosphoserine.

This sequence belongs to the cyclin family. Cyclin C subfamily. In terms of assembly, component of the Mediator complex, which is composed of MED1, MED4, MED6, MED7, MED8, MED9, MED10, MED11, MED12, MED13, MED13L, MED14, MED15, MED16, MED17, MED18, MED19, MED20, MED21, MED22, MED23, MED24, MED25, MED26, MED27, MED29, MED30, MED31, CCNC, CDK8 and CDC2L6/CDK11. The MED12, MED13, CCNC and CDK8 subunits form a distinct module termed the CDK8 module. Mediator containing the CDK8 module is less active than Mediator lacking this module in supporting transcriptional activation. Individual preparations of the Mediator complex lacking one or more distinct subunits have been variously termed ARC, CRSP, DRIP, PC2, SMCC and TRAP. The cylin/CDK pair formed by CCNC/CDK8 also associates with the large subunit of RNA polymerase II. In terms of tissue distribution, highest levels in pancreas. High levels in heart, liver, skeletal muscle and kidney. Low levels in brain.

The protein resides in the nucleus. Component of the Mediator complex, a coactivator involved in regulated gene transcription of nearly all RNA polymerase II-dependent genes. Mediator functions as a bridge to convey information from gene-specific regulatory proteins to the basal RNA polymerase II transcription machinery. Mediator is recruited to promoters by direct interactions with regulatory proteins and serves as a scaffold for the assembly of a functional preinitiation complex with RNA polymerase II and the general transcription factors. Binds to and activates cyclin-dependent kinase CDK8 that phosphorylates the CTD (C-terminal domain) of the large subunit of RNA polymerase II (RNAp II), which may inhibit the formation of a transcription initiation complex. The chain is Cyclin-C (CCNC) from Homo sapiens (Human).